Reading from the N-terminus, the 329-residue chain is MHPKVQSLLSKFPRVELIPWETPIQYLPNISKLVGADIYVKRDDLTGLGIGGNKIRKLEYLLGDAIIRKADVIITVGAVHSNHAFVTGLAAKKLGFDVVLVLRGKEELRGNYLLDKIMGIETRVYEAKDSFELMKYAEEVAKELEEKGRKPYIIPVGGASPVGTLGYVRASGEIAEQGNRIGVNFDSIVVATGSGGTLAGLSVGLAILRKETRAIGMAVGKFGETMVNKVEELAKATGEFIGVKNLKLKIELYDYSFGEYGKITREVAETIRLVGTKEGVILDPVYTGKAFYGLLDLAKKGELGEKILFIHTGGISGTFHYGDKILSFL.

K54 is modified (N6-(pyridoxal phosphate)lysine).

This sequence belongs to the ACC deaminase/D-cysteine desulfhydrase family. Pyridoxal 5'-phosphate serves as cofactor.

It carries out the reaction 1-aminocyclopropane-1-carboxylate + H2O = 2-oxobutanoate + NH4(+). In Pyrococcus furiosus (strain ATCC 43587 / DSM 3638 / JCM 8422 / Vc1), this protein is Putative 1-aminocyclopropane-1-carboxylate deaminase.